Reading from the N-terminus, the 75-residue chain is Large ribosomal subunit protein uL30 (75 aa).

The protein belongs to the universal ribosomal protein uL30 family. In terms of assembly, part of the 50S ribosomal subunit.

This Roseiflexus castenholzii (strain DSM 13941 / HLO8) protein is Large ribosomal subunit protein uL30.